The following is a 253-amino-acid chain: uncharacterized protein (253 aa).

The 207-residue stretch at 30-236 folds into the BPL/LPL catalytic domain; the sequence is AQGRQVAQLW…AVDDDAALMA (207 aa).

This is an uncharacterized protein from Cupriavidus necator (strain ATCC 17699 / DSM 428 / KCTC 22496 / NCIMB 10442 / H16 / Stanier 337) (Ralstonia eutropha).